The chain runs to 147 residues: MSLKRINKELSDLGRDPPSSCSAGPVGDDLYHWQASIMGPPDSPYAGGVFFLSIHFPTDYPLKPPKIALTTKIYHPNINSNGNICLDILKDQWSPALTISKVLLSICSLLTDANPDDPLVPEIAHIYKQDRKKYEATAKEWTKKYAV.

One can recognise a UBC core domain in the interval 1-147 (MSLKRINKEL…AKEWTKKYAV (147 aa)). Catalysis depends on cysteine 85, which acts as the Glycyl thioester intermediate.

The protein belongs to the ubiquitin-conjugating enzyme family.

The catalysed reaction is S-ubiquitinyl-[E1 ubiquitin-activating enzyme]-L-cysteine + [E2 ubiquitin-conjugating enzyme]-L-cysteine = [E1 ubiquitin-activating enzyme]-L-cysteine + S-ubiquitinyl-[E2 ubiquitin-conjugating enzyme]-L-cysteine.. It participates in protein modification; protein ubiquitination. In terms of biological role, E2 ubiquitin-conjugating enzyme that catalyzes the covalent attachment of ubiquitin to other proteins. Mediates the selective degradation of short-lived and abnormal proteins. Mediates ubiquitination of PEX5. This chain is Ubiquitin-conjugating enzyme E2 4 (UBC4), found in Candida albicans (Yeast).